A 348-amino-acid chain; its full sequence is NADH-quinone oxidoreductase subunit H (348 aa).

8 helical membrane passes run Ile25–Leu45, Phe95–Ile115, Ile128–Gly148, Ile168–Phe188, Trp204–Thr224, Phe254–Phe274, Ile287–Leu307, and Val327–Ala347.

It belongs to the complex I subunit 1 family. As to quaternary structure, NDH-1 is composed of 14 different subunits. Subunits NuoA, H, J, K, L, M, N constitute the membrane sector of the complex.

Its subcellular location is the cell inner membrane. It carries out the reaction a quinone + NADH + 5 H(+)(in) = a quinol + NAD(+) + 4 H(+)(out). In terms of biological role, NDH-1 shuttles electrons from NADH, via FMN and iron-sulfur (Fe-S) centers, to quinones in the respiratory chain. The immediate electron acceptor for the enzyme in this species is believed to be ubiquinone. Couples the redox reaction to proton translocation (for every two electrons transferred, four hydrogen ions are translocated across the cytoplasmic membrane), and thus conserves the redox energy in a proton gradient. This subunit may bind ubiquinone. The chain is NADH-quinone oxidoreductase subunit H from Psychrobacter sp. (strain PRwf-1).